The following is a 112-amino-acid chain: Nucleoid-associated protein CPR_0056 (112 aa).

Residues 91-100 are compositionally biased toward basic and acidic residues; it reads ASEETSEKMG. The interval 91–112 is disordered; sequence ASEETSEKMGKLTGGMGMPGLF. Residues 102 to 112 show a composition bias toward gly residues; the sequence is LTGGMGMPGLF.

This sequence belongs to the YbaB/EbfC family. Homodimer.

It localises to the cytoplasm. It is found in the nucleoid. In terms of biological role, binds to DNA and alters its conformation. May be involved in regulation of gene expression, nucleoid organization and DNA protection. This is Nucleoid-associated protein CPR_0056 from Clostridium perfringens (strain SM101 / Type A).